We begin with the raw amino-acid sequence, 485 residues long: Sodium-coupled neutral amino acid symporter 1 (485 aa).

The Cytoplasmic portion of the chain corresponds to 1–74 (MMHFKSGLEL…EYIPGTTSLG (74 aa)). Serine 6 bears the Phosphoserine mark. Threonine 11 is modified (phosphothreonine). Serine 25, serine 28, serine 49, and serine 52 each carry phosphoserine. Threonine 54 carries the post-translational modification Phosphothreonine. Serine 56 is subject to Phosphoserine. A helical membrane pass occupies residues 75-97 (MSVFNLSNAIMGSGILGLAFALA). Residues 98–112 (NTGILLFLILLTSVT) lie on the Extracellular side of the membrane. Residues 113–133 (LLSIYSINLLLICSKETGCMV) traverse the membrane as a helical segment. At 134–148 (YEKLGEQVFGTTGKL) the chain is on the cytoplasmic side. Residues 149–169 (VIFGATSLQNTGAMLSYLFIV) traverse the membrane as a helical segment. Residues 170–188 (KNELPSAIKSLMGEEETFS) lie on the Extracellular side of the membrane. The helical transmembrane segment at 189–211 (AWYVDGRVLVVMVTFGIILPLCL) threads the bilayer. The Cytoplasmic segment spans residues 212-216 (LKNLG). A helical transmembrane segment spans residues 217–237 (YLGYTSGFSLSCMVFFLIVVI). The Extracellular portion of the chain corresponds to 238 to 273 (YKKFQIPCMNGEQNSTVSANVTDACTPKYVTFNSKT). Cysteines 245 and 262 form a disulfide. N-linked (GlcNAc...) asparagine glycosylation is found at asparagine 251 and asparagine 257. The chain crosses the membrane as a helical span at residues 274–294 (VYALPTIAFAFVCHPSVLPIY). At 295–310 (SELKDRSQKKMQMVSN) the chain is on the cytoplasmic side. A helical transmembrane segment spans residues 311-331 (ISFFAMFVMYFLTAIFGYLTF). Over 332 to 348 (YEKVQSDLLHKYQSTGD) the chain is Extracellular. Residues 349-369 (ILILTVRLAVIVAVILTVPVL) form a helical membrane-spanning segment. The Cytoplasmic segment spans residues 370–391 (FFTVRSSLFELAKKTKFHLCRH). The helical transmembrane segment at 392 to 412 (VLVTIILLVIINLLVIFIPSM) threads the bilayer. Topologically, residues 413–414 (KD) are extracellular. The helical transmembrane segment at 415-435 (IFGVVGVTSANMLIFILPSSL) threads the bilayer. Over 436 to 450 (YLKITNQDGDKNTQR) the chain is Cytoplasmic. Residues 451–471 (IWAALFLALGVLFSLISIPLV) form a helical membrane-spanning segment. The Extracellular portion of the chain corresponds to 472 to 485 (IYDWACSSSNGEGH).

This sequence belongs to the amino acid/polyamine transporter 2 family. In terms of processing, N-glycosylation plays an important role in the L-glutamine transport. Specifically expressed in brain with the highest levels in cerebellum and thalamus (at protein level). Expressed in glutamatergic, GABAergic and a subset of dopaminergic neurons of the substantia nigra and cholinergic motoneurons (at protein level). Also expressed by ependymal cells lining the ventricle (at protein level). Expression is also detected in spinal cord, heart, colon and placenta.

It localises to the cell membrane. It carries out the reaction L-glutamine(in) + Na(+)(in) = L-glutamine(out) + Na(+)(out). The enzyme catalyses L-alanine(in) + Na(+)(in) = L-alanine(out) + Na(+)(out). It catalyses the reaction L-asparagine(in) + Na(+)(in) = L-asparagine(out) + Na(+)(out). The catalysed reaction is L-histidine(in) + Na(+)(in) = L-histidine(out) + Na(+)(out). It carries out the reaction L-serine(in) + Na(+)(in) = L-serine(out) + Na(+)(out). The enzyme catalyses L-cysteine(in) + Na(+)(in) = L-cysteine(out) + Na(+)(out). It catalyses the reaction L-methionine(in) + Na(+)(in) = L-methionine(out) + Na(+)(out). The catalysed reaction is glycine(in) + Na(+)(in) = glycine(out) + Na(+)(out). It carries out the reaction L-threonine(in) + Na(+)(in) = L-threonine(out) + Na(+)(out). The enzyme catalyses L-proline(in) + Na(+)(in) = L-proline(out) + Na(+)(out). Its activity is regulated as follows. Inhibited by alpha-(methylamino)isobutyric acid (MeAIB). Inhibited by lithium, potassium, choline ions, N-methylglucamine. The pH dependence has an allosteric effect on the transport. In terms of biological role, symporter that cotransports short-chain neutral amino acids and sodium ions from the extraccellular to the intracellular side of the cell membrane. The transport is elctrogenic, pH dependent and driven by the Na(+) electrochemical gradient. Participates in the astroglia-derived glutamine transport into GABAergic interneurons for neurotransmitter GABA de novo synthesis. May also contributes to amino acid transport in placental trophoblast. Regulates synaptic plasticity. This chain is Sodium-coupled neutral amino acid symporter 1, found in Rattus norvegicus (Rat).